Reading from the N-terminus, the 2376-residue chain is MAG2-interacting protein 2 (2376 aa).

In terms of assembly, forms a complex with MAG2, ZW10/MIP1 and MIP3 on the endoplasmic reticulum.

It localises to the endoplasmic reticulum membrane. In terms of biological role, required for proper maturation of seed storage proteins. Forms a complex with MAG2, ZW10/MIP1 and MIP3 on the endoplasmic reticulum that may be responsible for efficient transport of seed storage proteins. The chain is MAG2-interacting protein 2 from Arabidopsis thaliana (Mouse-ear cress).